Reading from the N-terminus, the 362-residue chain is Nuclear hormone receptor family member nhr-77 (362 aa).

The nuclear receptor DNA-binding region spans 8-82 (DPICPVCEFP…AGMKRNLVKQ (75 aa)). NR C4-type zinc fingers lie at residues 11–32 (CPVCEFPSNVELHFGGLVCGAC) and 48–69 (CEKNNQCKGMRKNCRACRFDYC). The 218-residue stretch at 145–362 (EAEKDVSKIL…KLYIQLGLPF (218 aa)) folds into the NR LBD domain.

It belongs to the nuclear hormone receptor family.

It localises to the nucleus. Its function is as follows. Orphan nuclear receptor. This Caenorhabditis elegans protein is Nuclear hormone receptor family member nhr-77 (nhr-77).